The sequence spans 144 residues: Eukaryotic translation initiation factor 1A (144 aa).

Basic residues predominate over residues methionine 1–glycine 15. 2 disordered regions span residues methionine 1–glutamate 25 and aspartate 120–isoleucine 144. The span at lysine 16–glutamate 25 shows a compositional bias: basic and acidic residues. Positions aspartate 22–methionine 96 constitute an S1-like domain.

This sequence belongs to the eIF-1A family.

In terms of biological role, seems to be required for maximal rate of protein biosynthesis. Enhances ribosome dissociation into subunits and stabilizes the binding of the initiator Met-tRNA(I) to 40 S ribosomal subunits. The polypeptide is Eukaryotic translation initiation factor 1A (Triticum aestivum (Wheat)).